A 67-amino-acid chain; its full sequence is UPF0253 protein VS_2370 (67 aa).

Belongs to the UPF0253 family.

This chain is UPF0253 protein VS_2370, found in Vibrio atlanticus (strain LGP32) (Vibrio splendidus (strain Mel32)).